The sequence spans 248 residues: Acetoacetyl-CoA reductase (248 aa).

NADP(+) is bound by residues 14-16 (GGI), R42, and 90-94 (NAGIT). Substrate is bound by residues D96 and 149–152 (QFGQ). The active-site Proton acceptor is the Y155. Residue 185–188 (PGYT) participates in NADP(+) binding. Substrate-binding positions include 186-187 (GY) and R197.

This sequence belongs to the short-chain dehydrogenases/reductases (SDR) family.

The protein resides in the cytoplasm. The catalysed reaction is a (3R)-3-hydroxyacyl-CoA + NADP(+) = a 3-oxoacyl-CoA + NADPH + H(+). The protein operates within biopolymer metabolism; poly-(R)-3-hydroxybutanoate biosynthesis. This Acinetobacter sp. (strain RA3849) protein is Acetoacetyl-CoA reductase (phaB).